A 188-amino-acid chain; its full sequence is Ribosomal RNA small subunit methyltransferase G (188 aa).

S-adenosyl-L-methionine is bound by residues G69, F74, V119–Q120, and R134.

Belongs to the methyltransferase superfamily. RNA methyltransferase RsmG family.

Its subcellular location is the cytoplasm. It catalyses the reaction guanosine(527) in 16S rRNA + S-adenosyl-L-methionine = N(7)-methylguanosine(527) in 16S rRNA + S-adenosyl-L-homocysteine. Specifically methylates the N7 position of guanine in position 527 of 16S rRNA. This is Ribosomal RNA small subunit methyltransferase G from Campylobacter jejuni (strain RM1221).